Here is a 232-residue protein sequence, read N- to C-terminus: Nucleoside diphosphate kinase 2, chloroplastic (232 aa).

A chloroplast-targeting transit peptide spans 1 to 79 (MGCLSVVGAS…TRIFLPHLVA (79 aa)). ATP contacts are provided by lysine 92, phenylalanine 140, arginine 168, threonine 174, arginine 185, and asparagine 195. Catalysis depends on histidine 198, which acts as the Pros-phosphohistidine intermediate.

It belongs to the NDK family. Mg(2+) is required as a cofactor.

Its subcellular location is the plastid. The protein resides in the chloroplast. The catalysed reaction is a 2'-deoxyribonucleoside 5'-diphosphate + ATP = a 2'-deoxyribonucleoside 5'-triphosphate + ADP. It catalyses the reaction a ribonucleoside 5'-diphosphate + ATP = a ribonucleoside 5'-triphosphate + ADP. In terms of biological role, major role in the synthesis of nucleoside triphosphates other than ATP. The ATP gamma phosphate is transferred to the NDP beta phosphate via a ping-pong mechanism, using a phosphorylated active-site intermediate. This is Nucleoside diphosphate kinase 2, chloroplastic from Nicotiana tabacum (Common tobacco).